The chain runs to 64 residues: UPF0337 protein SAR0874 (64 aa).

The interval Met1–Ala40 is disordered. The segment covering Lys25–Ala40 has biased composition (basic and acidic residues).

It belongs to the UPF0337 (CsbD) family.

This Staphylococcus aureus (strain MRSA252) protein is UPF0337 protein SAR0874.